A 292-amino-acid polypeptide reads, in one-letter code: Glycine--tRNA ligase alpha subunit (292 aa).

The protein belongs to the class-II aminoacyl-tRNA synthetase family. As to quaternary structure, tetramer of two alpha and two beta subunits.

It is found in the cytoplasm. The enzyme catalyses tRNA(Gly) + glycine + ATP = glycyl-tRNA(Gly) + AMP + diphosphate. In Geobacter sulfurreducens (strain ATCC 51573 / DSM 12127 / PCA), this protein is Glycine--tRNA ligase alpha subunit.